An 86-amino-acid chain; its full sequence is Small ribosomal subunit protein bS16 (86 aa).

Belongs to the bacterial ribosomal protein bS16 family.

In Xylella fastidiosa (strain 9a5c), this protein is Small ribosomal subunit protein bS16.